The following is a 342-amino-acid chain: S-adenosylmethionine:tRNA ribosyltransferase-isomerase (342 aa).

Belongs to the QueA family. Monomer.

Its subcellular location is the cytoplasm. The enzyme catalyses 7-aminomethyl-7-carbaguanosine(34) in tRNA + S-adenosyl-L-methionine = epoxyqueuosine(34) in tRNA + adenine + L-methionine + 2 H(+). Its pathway is tRNA modification; tRNA-queuosine biosynthesis. Transfers and isomerizes the ribose moiety from AdoMet to the 7-aminomethyl group of 7-deazaguanine (preQ1-tRNA) to give epoxyqueuosine (oQ-tRNA). The protein is S-adenosylmethionine:tRNA ribosyltransferase-isomerase of Campylobacter jejuni subsp. jejuni serotype O:23/36 (strain 81-176).